The primary structure comprises 275 residues: Putative ankyrin repeat protein L715 (275 aa).

ANK repeat units lie at residues 94-123 (NINY…DINY), 124-153 (NNGL…NTND), 155-183 (IFQL…SIDP), and 184-213 (IYST…SDST). The disordered stretch occupies residues 253–275 (NQDESDVGDDAENDIENDIEDDN). Residues 255 to 275 (DESDVGDDAENDIENDIEDDN) show a composition bias toward acidic residues.

The sequence is that of Putative ankyrin repeat protein L715 from Acanthamoeba polyphaga mimivirus (APMV).